The following is an 80-amino-acid chain: Large ribosomal subunit protein uL24 (80 aa).

Residues 53–80 (HMRPTQGQTQGSIIEREFPIHSSNVKKS) are disordered.

It belongs to the universal ribosomal protein uL24 family. As to quaternary structure, part of the 50S ribosomal subunit.

In terms of biological role, one of two assembly initiator proteins, it binds directly to the 5'-end of the 23S rRNA, where it nucleates assembly of the 50S subunit. One of the proteins that surrounds the polypeptide exit tunnel on the outside of the subunit. The sequence is that of Large ribosomal subunit protein uL24 from Pelodictyon phaeoclathratiforme (strain DSM 5477 / BU-1).